A 167-amino-acid chain; its full sequence is NAD(P)H-quinone oxidoreductase subunit I, chloroplastic (167 aa).

4Fe-4S ferredoxin-type domains lie at 55–84 and 95–124; these read GRIH…VDWK and LNYS…MTEE. Residues C64, C67, C70, C74, C104, C107, C110, and C114 each coordinate [4Fe-4S] cluster.

The protein belongs to the complex I 23 kDa subunit family. In terms of assembly, NDH is composed of at least 16 different subunits, 5 of which are encoded in the nucleus. Requires [4Fe-4S] cluster as cofactor.

The protein resides in the plastid. Its subcellular location is the chloroplast thylakoid membrane. It carries out the reaction a plastoquinone + NADH + (n+1) H(+)(in) = a plastoquinol + NAD(+) + n H(+)(out). It catalyses the reaction a plastoquinone + NADPH + (n+1) H(+)(in) = a plastoquinol + NADP(+) + n H(+)(out). NDH shuttles electrons from NAD(P)H:plastoquinone, via FMN and iron-sulfur (Fe-S) centers, to quinones in the photosynthetic chain and possibly in a chloroplast respiratory chain. The immediate electron acceptor for the enzyme in this species is believed to be plastoquinone. Couples the redox reaction to proton translocation, and thus conserves the redox energy in a proton gradient. The protein is NAD(P)H-quinone oxidoreductase subunit I, chloroplastic of Eucalyptus globulus subsp. globulus (Tasmanian blue gum).